We begin with the raw amino-acid sequence, 93 residues long: Large ribosomal subunit protein uL23cz/uL23cy (93 aa).

This sequence belongs to the universal ribosomal protein uL23 family. In terms of assembly, part of the 50S ribosomal subunit.

It is found in the plastid. Its subcellular location is the chloroplast. In terms of biological role, binds to 23S rRNA. The chain is Large ribosomal subunit protein uL23cz/uL23cy (rpl23-A) from Phaseolus angularis (Azuki bean).